A 426-amino-acid polypeptide reads, in one-letter code: 26S proteasome regulatory subunit 7 (426 aa).

209–216 (GPPGTGKT) provides a ligand contact to ATP.

The protein belongs to the AAA ATPase family.

The protein localises to the cytoplasm. The protein resides in the nucleus. Its function is as follows. The 26S proteasome is involved in the ATP-dependent degradation of ubiquitinated proteins. The regulatory (or ATPase) complex confers ATP dependency and substrate specificity to the 26S complex. The sequence is that of 26S proteasome regulatory subunit 7 (RPT1) from Spinacia oleracea (Spinach).